Consider the following 73-residue polypeptide: Long neurotoxin 3 (73 aa).

Cystine bridges form between C3/C21, C14/C42, C27/C31, C46/C57, and C58/C63.

The protein belongs to the three-finger toxin family. Long-chain subfamily. Type II alpha-neurotoxin sub-subfamily. In terms of tissue distribution, expressed by the venom gland.

It localises to the secreted. Its function is as follows. Binds with high affinity to muscular (alpha-1/CHRNA1) and neuronal (alpha-7/CHRNA7) nicotinic acetylcholine receptor (nAChR) and inhibits acetylcholine from binding to the receptor, thereby impairing neuromuscular and neuronal transmission. This chain is Long neurotoxin 3, found in Ophiophagus hannah (King cobra).